The following is a 446-amino-acid chain: ATP synthase subunit b-delta (446 aa).

Residues 1-168 are ATP synthase subunit b; it reads MSTFIGQLFG…PATADVDYPL (168 aa). A helical transmembrane segment spans residues 4 to 24; sequence FIGQLFGFAVIVYLVWRFIVP. The ATP synthase subunit delta stretch occupies residues 169-446; the sequence is LAKMRSASRR…LAAAEARLPD (278 aa).

The protein in the N-terminal section; belongs to the ATPase B chain family. In the C-terminal section; belongs to the ATPase delta chain family. As to quaternary structure, F-type ATPases have 2 components, F(1) - the catalytic core - and F(0) - the membrane proton channel. F(1) has five subunits: alpha(3), beta(3), gamma(1), delta(1), epsilon(1). F(0) has three main subunits: a(1), b(2) and c(10-14). The alpha and beta chains form an alternating ring which encloses part of the gamma chain. F(1) is attached to F(0) by a central stalk formed by the gamma and epsilon chains, while a peripheral stalk is formed by the delta and b chains.

The protein resides in the cell membrane. Its function is as follows. F(1)F(0) ATP synthase produces ATP from ADP in the presence of a proton or sodium gradient. F-type ATPases consist of two structural domains, F(1) containing the extramembraneous catalytic core and F(0) containing the membrane proton channel, linked together by a central stalk and a peripheral stalk. During catalysis, ATP synthesis in the catalytic domain of F(1) is coupled via a rotary mechanism of the central stalk subunits to proton translocation. Functionally, this fusion protein includes a component of the F(0) channel (subunit b) and of the F(1) subunit (subunit delta). Two copies of subunit b and one of delta together form the peripheral 'stator' stalk which links F(1) to F(0). The protein is ATP synthase subunit b-delta (atpFH) of Mycobacterium bovis (strain ATCC BAA-935 / AF2122/97).